Consider the following 688-residue polypeptide: Glycine--tRNA ligase beta subunit (688 aa).

The protein belongs to the class-II aminoacyl-tRNA synthetase family. Tetramer of two alpha and two beta subunits.

It is found in the cytoplasm. It catalyses the reaction tRNA(Gly) + glycine + ATP = glycyl-tRNA(Gly) + AMP + diphosphate. The protein is Glycine--tRNA ligase beta subunit of Lactobacillus delbrueckii subsp. bulgaricus (strain ATCC BAA-365 / Lb-18).